The primary structure comprises 150 residues: Lipoprotein signal peptidase (150 aa).

Transmembrane regions (helical) follow at residues 5–25 (LSLV…NWVV), 59–79 (QQWF…WFLW), and 82–102 (MGQN…LGNF). Residues aspartate 113 and aspartate 129 contribute to the active site. Residues 124-144 (IFNIADILLSVGFVVLFIAIL) form a helical membrane-spanning segment.

It belongs to the peptidase A8 family.

The protein localises to the cell membrane. It carries out the reaction Release of signal peptides from bacterial membrane prolipoproteins. Hydrolyzes -Xaa-Yaa-Zaa-|-(S,diacylglyceryl)Cys-, in which Xaa is hydrophobic (preferably Leu), and Yaa (Ala or Ser) and Zaa (Gly or Ala) have small, neutral side chains.. Its pathway is protein modification; lipoprotein biosynthesis (signal peptide cleavage). In terms of biological role, this protein specifically catalyzes the removal of signal peptides from prolipoproteins. This Lactococcus lactis subsp. cremoris (strain SK11) protein is Lipoprotein signal peptidase.